The chain runs to 71 residues: Large ribosomal subunit protein uL30 (71 aa).

The protein belongs to the universal ribosomal protein uL30 family. As to quaternary structure, part of the 50S ribosomal subunit.

This chain is Large ribosomal subunit protein uL30, found in Borreliella burgdorferi (strain ATCC 35210 / DSM 4680 / CIP 102532 / B31) (Borrelia burgdorferi).